Reading from the N-terminus, the 496-residue chain is UDP-N-acetylmuramoyl-L-alanyl-D-glutamate--2,6-diaminopimelate ligase (496 aa).

Residues Leu29 and Ser31 each coordinate UDP-N-acetyl-alpha-D-muramoyl-L-alanyl-D-glutamate. Position 118 to 124 (118 to 124 (GTNGKTT)) interacts with ATP. UDP-N-acetyl-alpha-D-muramoyl-L-alanyl-D-glutamate contacts are provided by residues Asn159, 160 to 161 (TT), Ser187, Gln193, and Arg195. Position 227 is an N6-carboxylysine (Lys227). Residues Arg392, 416 to 419 (DNPR), Gly467, and Glu471 contribute to the meso-2,6-diaminopimelate site. Positions 416-419 (DNPR) match the Meso-diaminopimelate recognition motif motif.

This sequence belongs to the MurCDEF family. MurE subfamily. Mg(2+) is required as a cofactor. Post-translationally, carboxylation is probably crucial for Mg(2+) binding and, consequently, for the gamma-phosphate positioning of ATP.

The protein localises to the cytoplasm. It carries out the reaction UDP-N-acetyl-alpha-D-muramoyl-L-alanyl-D-glutamate + meso-2,6-diaminopimelate + ATP = UDP-N-acetyl-alpha-D-muramoyl-L-alanyl-gamma-D-glutamyl-meso-2,6-diaminopimelate + ADP + phosphate + H(+). It functions in the pathway cell wall biogenesis; peptidoglycan biosynthesis. In terms of biological role, catalyzes the addition of meso-diaminopimelic acid to the nucleotide precursor UDP-N-acetylmuramoyl-L-alanyl-D-glutamate (UMAG) in the biosynthesis of bacterial cell-wall peptidoglycan. This Wigglesworthia glossinidia brevipalpis protein is UDP-N-acetylmuramoyl-L-alanyl-D-glutamate--2,6-diaminopimelate ligase.